The chain runs to 157 residues: uncharacterized protein (157 aa).

The region spanning 9–154 (LLINYKTLDE…ETNSNAITNE (146 aa)) is the N-acetyltransferase domain.

This is an uncharacterized protein from Bacillus mycoides (strain KBAB4) (Bacillus weihenstephanensis).